The primary structure comprises 260 residues: Dynein regulatory complex subunit 6 (260 aa).

Over residues 1–13 (MAPKKKGGGKKKK) the composition is skewed to basic residues. A disordered region spans residues 1–43 (MAPKKKGGGKKKKKDDGAEPPHDGSWERAVESGTWEKPVTDLP). Basic and acidic residues predominate over residues 14–30 (KDDGAEPPHDGSWERAV).

Belongs to the DRC6 family. Component of the nexin-dynein regulatory complex (N-DRC).

It is found in the cytoplasm. Its subcellular location is the cytoskeleton. The protein resides in the flagellum axoneme. Its function is as follows. Component of the nexin-dynein regulatory complex (N-DRC), a key regulator of ciliary/flagellar motility which maintains the alignment and integrity of the distal axoneme and regulates microtubule sliding in motile axonemes. The protein is Dynein regulatory complex subunit 6 of Chlamydomonas reinhardtii (Chlamydomonas smithii).